Here is a 494-residue protein sequence, read N- to C-terminus: Sugiol synthase (494 aa).

Residues 3–23 traverse the membrane as a helical segment; sequence SFSLLAALFFISAATWFISSR. Residue Cys-437 coordinates heme.

Belongs to the cytochrome P450 family. The cofactor is heme. As to expression, expressed in roots.

The protein resides in the membrane. The catalysed reaction is ferruginol + 2 reduced [NADPH--hemoprotein reductase] + 2 O2 = sugiol + 2 oxidized [NADPH--hemoprotein reductase] + 3 H2O + 2 H(+). It catalyses the reaction ferruginol + reduced [NADPH--hemoprotein reductase] + O2 = 11-hydroxyferruginol + oxidized [NADPH--hemoprotein reductase] + H2O + H(+). It carries out the reaction 11-hydroxyferruginol + 2 reduced [NADPH--hemoprotein reductase] + 2 O2 = 11-hydroxysugiol + 2 oxidized [NADPH--hemoprotein reductase] + 3 H2O + 2 H(+). It functions in the pathway secondary metabolite biosynthesis; terpenoid biosynthesis. Monooxygenase that oxidizes ferruginol to produce sugiol. Oxidizes ferruginol at C-12 to produce 11-hydroxyferruginol. Can oxidize 11-hydroxyferruginol to 11-hydroxysugiol. These products are intermediates in tanshinone biosynthesis. The sequence is that of Sugiol synthase from Salvia miltiorrhiza (Chinese sage).